We begin with the raw amino-acid sequence, 302 residues long: Diacetylchitobiose uptake system permease protein NgcG (302 aa).

The next 6 membrane-spanning stretches (helical) occupy residues 40–60, 99–119, 131–151, 166–186, 221–241, and 268–288; these read LLIL…MSSF, VIVV…CAYV, IYYV…VPLF, LILT…YSFF, AAVA…PVAL, and GALF…YCVF. Residues 95–288 enclose the ABC transmembrane type-1 domain; sequence FLNSVIVVVS…VPVLLVYCVF (194 aa).

The protein belongs to the binding-protein-dependent transport system permease family. The complex is composed of two ATP-binding proteins (MsiK), two transmembrane proteins (NgcF and NgcG) and a solute-binding protein (NgcE).

It is found in the cell membrane. Functionally, part of the ABC transporter complex NgcEFG-MsiK involved in N,N'-diacetylchitobiose ((GlcNAc)2) uptake. Responsible for the translocation of the substrate across the membrane. The chain is Diacetylchitobiose uptake system permease protein NgcG from Streptomyces coelicolor (strain ATCC BAA-471 / A3(2) / M145).